Consider the following 584-residue polypeptide: Transcriptional regulator STP2 (584 aa).

2 stretches are compositionally biased toward polar residues: residues 1-11 (MSVAITSNNNK) and 180-202 (AESN…SISD). Disordered regions lie at residues 1–22 (MSVA…PHLK) and 161–214 (KMHP…STVS). Residues 203–214 (SPSHSETESTVS) show a composition bias toward low complexity. The C2H2-type zinc-finger motif lies at 225–247 (FKCPSCDAEFRVRGYLTRHMKKH). Disordered regions lie at residues 381 to 496 (RQKK…PQQP) and 553 to 584 (QYQP…SMYF). A compositionally biased stretch (low complexity) spans 394–407 (SESSIQSQESESSI). Positions 431-441 (QHQHQHHHHVQ) are enriched in basic residues. The segment covering 442–480 (NQHQQHVNQQQSIATPASIYSSSASSTSSYESTHSPYTP) has biased composition (low complexity). Positions 481 to 496 (QSSRSPLSHMYNPQQP) are enriched in polar residues.

In terms of processing, proteolytically cleaved: activated by the amino acid-induced proteolytic removal of an N-terminal inhibitory domain.

It localises to the cell membrane. It is found in the nucleus. Transcription factor involved in the regulation of gene expression in response to extracellular amino acid levels. Synthesized as latent cytoplasmic precursor, which, upon a signal initiated by the plasma membrane SPS amino acid sensor system (including CSY1 and CSH3), becomes proteolytically activated and relocates to the nucleus, where it induces the expression of SPS-sensor-regulated genes. Required for efficient alkalinization through the release of ammonia from the cells produced during the breakdown of amino acids, and subsequent switch to the hyphal form. In Candida albicans (strain SC5314 / ATCC MYA-2876) (Yeast), this protein is Transcriptional regulator STP2 (STP2).